A 329-amino-acid polypeptide reads, in one-letter code: GTP 3',8-cyclase (329 aa).

The 227-residue stretch at 8–234 (AFARKFYYLR…QLRQRSDGPA (227 aa)) folds into the Radical SAM core domain. Arginine 17 lines the GTP pocket. Residues cysteine 24 and cysteine 28 each contribute to the [4Fe-4S] cluster site. Residue tyrosine 30 coordinates S-adenosyl-L-methionine. Cysteine 31 contacts [4Fe-4S] cluster. Position 68 (arginine 68) interacts with GTP. Glycine 72 provides a ligand contact to S-adenosyl-L-methionine. Residue threonine 99 coordinates GTP. Residue serine 123 participates in S-adenosyl-L-methionine binding. Residue lysine 160 participates in GTP binding. Methionine 194 lines the S-adenosyl-L-methionine pocket. [4Fe-4S] cluster-binding residues include cysteine 257 and cysteine 260. 262–264 (RLR) lines the GTP pocket. Cysteine 274 is a binding site for [4Fe-4S] cluster.

This sequence belongs to the radical SAM superfamily. MoaA family. Monomer and homodimer. Requires [4Fe-4S] cluster as cofactor.

The catalysed reaction is GTP + AH2 + S-adenosyl-L-methionine = (8S)-3',8-cyclo-7,8-dihydroguanosine 5'-triphosphate + 5'-deoxyadenosine + L-methionine + A + H(+). The protein operates within cofactor biosynthesis; molybdopterin biosynthesis. Functionally, catalyzes the cyclization of GTP to (8S)-3',8-cyclo-7,8-dihydroguanosine 5'-triphosphate. The sequence is that of GTP 3',8-cyclase from Salmonella heidelberg (strain SL476).